Reading from the N-terminus, the 138-residue chain is Nucleoside diphosphate kinase (138 aa).

Positions 9, 57, 85, 91, 102, and 112 each coordinate ATP. Catalysis depends on H115, which acts as the Pros-phosphohistidine intermediate.

Belongs to the NDK family. In terms of assembly, homotetramer. Mg(2+) is required as a cofactor.

It is found in the cytoplasm. It carries out the reaction a 2'-deoxyribonucleoside 5'-diphosphate + ATP = a 2'-deoxyribonucleoside 5'-triphosphate + ADP. The enzyme catalyses a ribonucleoside 5'-diphosphate + ATP = a ribonucleoside 5'-triphosphate + ADP. In terms of biological role, major role in the synthesis of nucleoside triphosphates other than ATP. The ATP gamma phosphate is transferred to the NDP beta phosphate via a ping-pong mechanism, using a phosphorylated active-site intermediate. The chain is Nucleoside diphosphate kinase from Lawsonia intracellularis (strain PHE/MN1-00).